A 260-amino-acid chain; its full sequence is NAD-capped RNA hydrolase NudC (260 aa).

Arginine 69 is a binding site for substrate. Zn(2+) contacts are provided by cysteine 98 and cysteine 101. Glutamate 111 contacts substrate. Residues cysteine 116 and cysteine 119 each contribute to the Zn(2+) site. Tyrosine 124 provides a ligand contact to substrate. The Nudix hydrolase domain occupies 125 to 248; the sequence is PQIAPCIIVA…TVARRLIEDT (124 aa). Positions 158, 174, and 178 each coordinate a divalent metal cation. Residues 159-180 carry the Nudix box motif; sequence GFVEVGETLEQTVVREVMEESQ. 192 to 199 contacts substrate; sequence QPWPFPHS. Glutamate 219 contacts a divalent metal cation. Alanine 241 contacts substrate.

The protein belongs to the Nudix hydrolase family. NudC subfamily. In terms of assembly, homodimer. Mg(2+) serves as cofactor. Requires Mn(2+) as cofactor. Zn(2+) is required as a cofactor.

It carries out the reaction a 5'-end NAD(+)-phospho-ribonucleoside in mRNA + H2O = a 5'-end phospho-adenosine-phospho-ribonucleoside in mRNA + beta-nicotinamide D-ribonucleotide + 2 H(+). The enzyme catalyses NAD(+) + H2O = beta-nicotinamide D-ribonucleotide + AMP + 2 H(+). It catalyses the reaction NADH + H2O = reduced beta-nicotinamide D-ribonucleotide + AMP + 2 H(+). Functionally, mRNA decapping enzyme that specifically removes the nicotinamide adenine dinucleotide (NAD) cap from a subset of mRNAs by hydrolyzing the diphosphate linkage to produce nicotinamide mononucleotide (NMN) and 5' monophosphate mRNA. The NAD-cap is present at the 5'-end of some mRNAs and stabilizes RNA against 5'-processing. Has preference for mRNAs with a 5'-end purine. Catalyzes the hydrolysis of a broad range of dinucleotide pyrophosphates. This is NAD-capped RNA hydrolase NudC from Pectobacterium carotovorum subsp. carotovorum (strain PC1).